A 68-amino-acid polypeptide reads, in one-letter code: Conotoxin Cal12.1p3 (68 aa).

Positions 1-21 (DLITNSYTRGKPRHVTSWPKL) are excised as a propeptide.

Post-translationally, contains 4 disulfide bonds. Expressed by the venom duct.

It localises to the secreted. This Californiconus californicus (California cone) protein is Conotoxin Cal12.1p3.